The sequence spans 266 residues: Undecaprenyl-diphosphatase (266 aa).

Helical transmembrane passes span 1–21, 39–59, 87–107, 111–131, 150–172, 187–207, 218–238, and 244–264; these read MTLTEIIILAIIQGITEFLPI, QGLAFDVAVHVGSLLAVMIYF, WWVIIATIPALIFGFAGKAFI, ARSALVIACTTIGFGLLLWYA, LIVGMAQALALIPGTSRSGITMT, FSFLLSIPVILGAGLLATLDL, ALIVGAVLSFVSAYACIYLFL, and IGMLPFVIYRMLLGVILLLFV.

This sequence belongs to the UppP family.

Its subcellular location is the cell inner membrane. It carries out the reaction di-trans,octa-cis-undecaprenyl diphosphate + H2O = di-trans,octa-cis-undecaprenyl phosphate + phosphate + H(+). Functionally, catalyzes the dephosphorylation of undecaprenyl diphosphate (UPP). Confers resistance to bacitracin. This Pseudoalteromonas atlantica (strain T6c / ATCC BAA-1087) protein is Undecaprenyl-diphosphatase.